The following is a 292-amino-acid chain: Homoserine kinase (292 aa).

81 to 91 (RPKSGLGSSGA) serves as a coordination point for ATP.

The protein belongs to the GHMP kinase family. Homoserine kinase subfamily.

Its subcellular location is the cytoplasm. The enzyme catalyses L-homoserine + ATP = O-phospho-L-homoserine + ADP + H(+). It participates in amino-acid biosynthesis; L-threonine biosynthesis; L-threonine from L-aspartate: step 4/5. Functionally, catalyzes the ATP-dependent phosphorylation of L-homoserine to L-homoserine phosphate. The protein is Homoserine kinase of Pyrococcus furiosus (strain ATCC 43587 / DSM 3638 / JCM 8422 / Vc1).